Reading from the N-terminus, the 330-residue chain is Aspartate--ammonia ligase (330 aa).

The protein belongs to the class-II aminoacyl-tRNA synthetase family. AsnA subfamily.

Its subcellular location is the cytoplasm. The enzyme catalyses L-aspartate + NH4(+) + ATP = L-asparagine + AMP + diphosphate + H(+). It functions in the pathway amino-acid biosynthesis; L-asparagine biosynthesis; L-asparagine from L-aspartate (ammonia route): step 1/1. The protein is Aspartate--ammonia ligase of Actinobacillus pleuropneumoniae serotype 7 (strain AP76).